A 176-amino-acid polypeptide reads, in one-letter code: ATP-dependent protease subunit HslV (176 aa).

Threonine 2 is a catalytic residue. Residues glycine 157, cysteine 160, and threonine 163 each contribute to the Na(+) site.

This sequence belongs to the peptidase T1B family. HslV subfamily. In terms of assembly, a double ring-shaped homohexamer of HslV is capped on each side by a ring-shaped HslU homohexamer. The assembly of the HslU/HslV complex is dependent on binding of ATP.

It localises to the cytoplasm. It carries out the reaction ATP-dependent cleavage of peptide bonds with broad specificity.. Allosterically activated by HslU binding. Its function is as follows. Protease subunit of a proteasome-like degradation complex believed to be a general protein degrading machinery. In Erwinia tasmaniensis (strain DSM 17950 / CFBP 7177 / CIP 109463 / NCPPB 4357 / Et1/99), this protein is ATP-dependent protease subunit HslV.